A 573-amino-acid chain; its full sequence is DNA ligase (573 aa).

Glu250 lines the ATP pocket. Lys252 (N6-AMP-lysine intermediate) is an active-site residue. The ATP site is built by Arg257, Arg272, Glu301, Phe342, Arg432, and Lys438.

It belongs to the ATP-dependent DNA ligase family. The cofactor is Mg(2+).

The catalysed reaction is ATP + (deoxyribonucleotide)n-3'-hydroxyl + 5'-phospho-(deoxyribonucleotide)m = (deoxyribonucleotide)n+m + AMP + diphosphate.. In terms of biological role, DNA ligase that seals nicks in double-stranded DNA during DNA replication, DNA recombination and DNA repair. This Methanococcus maripaludis (strain DSM 14266 / JCM 13030 / NBRC 101832 / S2 / LL) protein is DNA ligase.